Here is a 657-residue protein sequence, read N- to C-terminus: Glycogen debranching enzyme (657 aa).

The Nucleophile role is filled by D336. E371 serves as the catalytic Proton donor. Residues 458 to 467 are compositionally biased toward basic and acidic residues; it reads NEANGEENRD. Positions 458–479 are disordered; the sequence is NEANGEENRDGTNNNYSNNHGK.

It belongs to the glycosyl hydrolase 13 family.

It catalyses the reaction Hydrolysis of (1-&gt;6)-alpha-D-glucosidic linkages to branches with degrees of polymerization of three or four glucose residues in limit dextrin.. The protein operates within glycan degradation; glycogen degradation. In terms of biological role, removes maltotriose and maltotetraose chains that are attached by 1,6-alpha-linkage to the limit dextrin main chain, generating a debranched limit dextrin. In Shigella boydii serotype 18 (strain CDC 3083-94 / BS512), this protein is Glycogen debranching enzyme.